The chain runs to 711 residues: Polyribonucleotide nucleotidyltransferase (711 aa).

Mg(2+) contacts are provided by Asp-486 and Asp-492. Residues 553 to 612 enclose the KH domain; the sequence is PRIHTIKINPDKIKDVIGKGGSVIRALTEETGTTIEIEDDGTVKIAATDGEKAKHAIRRI. Positions 622–690 constitute an S1 motif domain; sequence GRVYTGKVTR…RQGRIRLSIK (69 aa). Residues 690–711 form a disordered region; that stretch reads KEATEQSQPAAAPEAPAAEQGE. The span at 694 to 711 shows a compositional bias: low complexity; sequence EQSQPAAAPEAPAAEQGE.

Belongs to the polyribonucleotide nucleotidyltransferase family. In terms of assembly, component of the RNA degradosome, which is a multiprotein complex involved in RNA processing and mRNA degradation. Mg(2+) is required as a cofactor.

It localises to the cytoplasm. The enzyme catalyses RNA(n+1) + phosphate = RNA(n) + a ribonucleoside 5'-diphosphate. Its function is as follows. Involved in mRNA degradation. Catalyzes the phosphorolysis of single-stranded polyribonucleotides processively in the 3'- to 5'-direction. The polypeptide is Polyribonucleotide nucleotidyltransferase (Shigella dysenteriae serotype 1 (strain Sd197)).